The following is a 98-amino-acid chain: NADH-ubiquinone oxidoreductase chain 4L (98 aa).

A run of 3 helical transmembrane segments spans residues 1–21 (MTSINLNLMTAFLLALAGVLM), 28–48 (STLLCLEGMMLSLYIMLSLLI), and 59–79 (APLILLVISACEAAGGLALLV).

Belongs to the complex I subunit 4L family. As to quaternary structure, core subunit of respiratory chain NADH dehydrogenase (Complex I) which is composed of 45 different subunits.

Its subcellular location is the mitochondrion inner membrane. It carries out the reaction a ubiquinone + NADH + 5 H(+)(in) = a ubiquinol + NAD(+) + 4 H(+)(out). Core subunit of the mitochondrial membrane respiratory chain NADH dehydrogenase (Complex I) which catalyzes electron transfer from NADH through the respiratory chain, using ubiquinone as an electron acceptor. Part of the enzyme membrane arm which is embedded in the lipid bilayer and involved in proton translocation. The polypeptide is NADH-ubiquinone oxidoreductase chain 4L (MT-ND4L) (Phascolarctos cinereus (Koala)).